The chain runs to 439 residues: Trehalose-phosphatase (439 aa).

Mg(2+) is bound by residues Asp163 and Asp165. The Proton donor/acceptor role is filled by Asp165. Residue 282–284 coordinates substrate; the sequence is QRK. Asp373 serves as a coordination point for Mg(2+).

This sequence belongs to the gob-1 trehalose phosphatase family. Mg(2+) is required as a cofactor. As to expression, ubiquitously expressed. Strong expression in intestine.

The catalysed reaction is alpha,alpha-trehalose 6-phosphate + H2O = alpha,alpha-trehalose + phosphate. Its function is as follows. Catalyzes the hydrolysis of trehalose 6-phosphate to trehalose and phosphate; prevents the accumulation of toxic levels of trehalose 6-phosphate. This chain is Trehalose-phosphatase, found in Caenorhabditis elegans.